Here is a 371-residue protein sequence, read N- to C-terminus: Ligninase LG5 (371 aa).

A signal peptide spans 1 to 21 (MAFKKLLAVLTAALSLRAAQG). The propeptide occupies 22-27 (AAVEKR). 4 cysteine pairs are disulfide-bonded: cysteine 30–cysteine 42, cysteine 41–cysteine 311, cysteine 61–cysteine 146, and cysteine 275–cysteine 344. The active-site Proton acceptor is the histidine 74. The Ca(2+) site is built by aspartate 75, glycine 92, aspartate 94, and serine 96. Histidine 202 serves as a coordination point for heme b. Serine 203, aspartate 220, threonine 222, isoleucine 225, and aspartate 227 together coordinate Ca(2+). An N-linked (GlcNAc...) asparagine glycan is attached at asparagine 283. Residues 349–371 (FPTLSTLPGPATSVARIPPPPGA) are disordered.

This sequence belongs to the peroxidase family. Ligninase subfamily. Ca(2+) serves as cofactor. Heme b is required as a cofactor.

The catalysed reaction is 1-(3,4-dimethoxyphenyl)-2-(2-methoxyphenoxy)propane-1,3-diol + H2O2 = 3,4-dimethoxybenzaldehyde + guaiacol + glycolaldehyde + H2O. The enzyme catalyses 2 (3,4-dimethoxyphenyl)methanol + H2O2 = 2 (3,4-dimethoxyphenyl)methanol radical + 2 H2O. Its pathway is secondary metabolite metabolism; lignin degradation. Functionally, depolymerization of lignin. Catalyzes the C(alpha)-C(beta) cleavage of the propyl side chains of lignin. The chain is Ligninase LG5 (GLG5) from Phanerodontia chrysosporium (White-rot fungus).